We begin with the raw amino-acid sequence, 569 residues long: Falcipain-1 (569 aa).

Residues 1–35 (MVAIKEMKEFAFARPSLVETLNKKKKFLKKKEKRT) are Cytoplasmic-facing. A propeptide spans 1–332 (MVAIKEMKEF…KRNEKDIFSK (332 aa)) (activation peptide). The helical; Signal-anchor for type II membrane protein transmembrane segment at 36 to 56 (FVLSIYAFITFIIFCIGILYF) threads the bilayer. Over 57 to 569 (TNKSSAHNNN…IGEEVFYPIL (513 aa)) the chain is Lumenal. N-linked (GlcNAc...) asparagine glycans are attached at residues asparagine 58, asparagine 98, asparagine 121, and asparagine 127. The segment at 97–118 (LNESSNEEDEEKYTLNSETYNN) is disordered. 3 disulfide bridges follow: cysteine 354–cysteine 395, cysteine 388–cysteine 428, and cysteine 413–cysteine 433. Residue cysteine 357 is part of the active site. N-linked (GlcNAc...) asparagine glycosylation is found at asparagine 479 and asparagine 487. Cysteine 482 and cysteine 558 form a disulfide bridge. Catalysis depends on residues histidine 488 and asparagine 533.

The protein belongs to the peptidase C1 family. Contains disulfide bonds.

The protein resides in the membrane. It localises to the cytoplasmic granule. Its function is as follows. Cysteine protease. In the mosquito midgut, required for parasite development. The sequence is that of Falcipain-1 from Plasmodium falciparum (isolate 3D7).